The following is a 311-amino-acid chain: tRNA dimethylallyltransferase (311 aa).

13–20 is a binding site for ATP; that stretch reads GPTASGKT. 15–20 provides a ligand contact to substrate; it reads TASGKT. Interaction with substrate tRNA regions lie at residues 38–41 and 166–170; these read DSMQ and QRGLR.

Belongs to the IPP transferase family. As to quaternary structure, monomer. The cofactor is Mg(2+).

The enzyme catalyses adenosine(37) in tRNA + dimethylallyl diphosphate = N(6)-dimethylallyladenosine(37) in tRNA + diphosphate. Catalyzes the transfer of a dimethylallyl group onto the adenine at position 37 in tRNAs that read codons beginning with uridine, leading to the formation of N6-(dimethylallyl)adenosine (i(6)A). This chain is tRNA dimethylallyltransferase, found in Staphylococcus aureus (strain MSSA476).